Reading from the N-terminus, the 176-residue chain is ATP-dependent protease subunit HslV (176 aa).

T2 is a catalytic residue. The Na(+) site is built by G157, C160, and T163.

This sequence belongs to the peptidase T1B family. HslV subfamily. A double ring-shaped homohexamer of HslV is capped on each side by a ring-shaped HslU homohexamer. The assembly of the HslU/HslV complex is dependent on binding of ATP.

The protein resides in the cytoplasm. It catalyses the reaction ATP-dependent cleavage of peptide bonds with broad specificity.. With respect to regulation, allosterically activated by HslU binding. Protease subunit of a proteasome-like degradation complex believed to be a general protein degrading machinery. The polypeptide is ATP-dependent protease subunit HslV (Salmonella agona (strain SL483)).